The chain runs to 203 residues: LexA repressor (203 aa).

The H-T-H motif DNA-binding region spans I28 to K47. Residues S127 and K164 each act as for autocatalytic cleavage activity in the active site.

The protein belongs to the peptidase S24 family. In terms of assembly, homodimer.

It carries out the reaction Hydrolysis of Ala-|-Gly bond in repressor LexA.. Its function is as follows. Represses a number of genes involved in the response to DNA damage (SOS response), including recA and lexA. In the presence of single-stranded DNA, RecA interacts with LexA causing an autocatalytic cleavage which disrupts the DNA-binding part of LexA, leading to derepression of the SOS regulon and eventually DNA repair. This is LexA repressor from Leptospira interrogans serogroup Icterohaemorrhagiae serovar copenhageni (strain Fiocruz L1-130).